The primary structure comprises 274 residues: ATP synthase subunit a (274 aa).

5 consecutive transmembrane segments (helical) span residues 43-63 (TLNIDSLFFSVVLGLAFLFVF), 103-123 (VIAPLALTVFVWVLLMNMMDL), 149-169 (DVSITLSMALGVFILILFYSI), 223-243 (LIFILIAGLLPWWSQWMLSLP), and 245-265 (AIFHILIITLQAFIFMVLTIV).

This sequence belongs to the ATPase A chain family. As to quaternary structure, F-type ATPases have 2 components, CF(1) - the catalytic core - and CF(0) - the membrane proton channel. CF(1) has five subunits: alpha(3), beta(3), gamma(1), delta(1), epsilon(1). CF(0) has three main subunits: a(1), b(2) and c(9-12). The alpha and beta chains form an alternating ring which encloses part of the gamma chain. CF(1) is attached to CF(0) by a central stalk formed by the gamma and epsilon chains, while a peripheral stalk is formed by the delta and b chains.

It is found in the cell inner membrane. In terms of biological role, key component of the proton channel; it plays a direct role in the translocation of protons across the membrane. The chain is ATP synthase subunit a from Yersinia enterocolitica serotype O:8 / biotype 1B (strain NCTC 13174 / 8081).